A 307-amino-acid chain; its full sequence is Membrane protein insertase YidC 2 (307 aa).

The signal sequence occupies residues 1–23 (MKLTLNRILFSGLALSILFTLTG). Cysteine 24 carries the N-palmitoyl cysteine lipid modification. Cysteine 24 is lipidated: S-diacylglycerol cysteine. The next 5 membrane-spanning stretches (helical) occupy residues 58–78 (LGYG…ILPL), 135–155 (LGGI…AMYF), 179–199 (VLTA…MMAV), 209–225 (TMMY…SFSL), and 231–251 (LYWL…TYLL). The interval 263 to 307 (YAKNPPKAYQSTSSRKDVTPSQNMEQANLPKKIKSNRNAGKQRKR) is disordered. Over residues 271 to 288 (YQSTSSRKDVTPSQNMEQ) the composition is skewed to polar residues. The segment covering 293 to 307 (KKIKSNRNAGKQRKR) has biased composition (basic residues).

The protein belongs to the OXA1/ALB3/YidC family. Type 2 subfamily.

The protein resides in the cell membrane. Functionally, required for the insertion and/or proper folding and/or complex formation of integral membrane proteins into the membrane. Involved in integration of membrane proteins that insert both dependently and independently of the Sec translocase complex, as well as at least some lipoproteins. The chain is Membrane protein insertase YidC 2 from Streptococcus pyogenes serotype M3 (strain ATCC BAA-595 / MGAS315).